The sequence spans 1040 residues: Multidrug resistance protein MdtB (1040 aa).

Helical transmembrane passes span 25–45 (LLMAAILLAGIIGYRFLPVAA), 347–367 (LMLAIALVVMIIYLFLRNIPA), 369–389 (IIPGVAVPLSLIGTFAVMVFL), 396–416 (LTLMALTIATGFVVDDAIVVI), 440–460 (IGFTIISLTFSLIAVLIPLLF), 472–492 (FAVTLAVAILISAVVSLTLTP), 537–557 (WLTLSVAFATLLLSVMLWIVI), 863–883 (LGSTVWLIVAAVVAMYIVLGV), 888–908 (FIHPITILSTLPTAGVGALLA), 910–930 (IIAGSELDIIAIIGIILLIGI), 968–988 (ILMTTLAALLGALPLMLSTGV), and 998–1018 (IAMVGGLLVSQVLTLFTTPVI).

This sequence belongs to the resistance-nodulation-cell division (RND) (TC 2.A.6) family. MdtB subfamily. In terms of assembly, part of a tripartite efflux system composed of MdtA, MdtB and MdtC. MdtB forms a heteromultimer with MdtC.

The protein localises to the cell inner membrane. The sequence is that of Multidrug resistance protein MdtB from Salmonella choleraesuis (strain SC-B67).